A 221-amino-acid polypeptide reads, in one-letter code: MNSHSTDKRKKITRIGIGGPVGSGKTAIIEVITPILIKRGIKPLIITNDIVTTEDAKQVKRTLKGILDEEKILGVETGACPHTAVREDPSMNIAAVEEMEERFPDSNLIMIESGGDNLTLTFSPALADFYIYVIDVAEGEKIPRKNGPGLVQADILVINKIDLAPYVGASLDVMESDTKVVRGERPYILTNCKTGQGIEELVDMIMRDFLFTHVQPQGEHA.

19 to 26 is a GTP binding site; sequence GPVGSGKT.

Belongs to the SIMIBI class G3E GTPase family. UreG subfamily. Homodimer. UreD, UreF and UreG form a complex that acts as a GTP-hydrolysis-dependent molecular chaperone, activating the urease apoprotein by helping to assemble the nickel containing metallocenter of UreC. The UreE protein probably delivers the nickel.

It is found in the cytoplasm. Functionally, facilitates the functional incorporation of the urease nickel metallocenter. This process requires GTP hydrolysis, probably effectuated by UreG. Expression of the urease operon increases the likelihood of bacterial survival by contributing to acid resistance in vitro and in vivo in BALB/c mice. Y.enterocolitica enters the body via an oral path and must survive the acidic stomach before being able to colonize the intestinal mucosa. The protein is Urease accessory protein UreG of Yersinia enterocolitica.